The following is a 2244-amino-acid chain: Multifunctional protein ura1 (2244 aa).

The GATase (Glutamine amidotransferase) stretch occupies residues 1-437; the sequence is MSGLLPSLSS…GPRDTEFLFD (437 aa). Positions 16-44 are disordered; the sequence is QSEALGMPRTHGPKPSENDPKEPTCSPSP. The L-glutamine site is built by Ser101, Gly309, and Gly311. The Glutamine amidotransferase type-1 domain occupies 264–449; it reads RILVIDVGMK…IDVVKRSADA (186 aa). Cys338 serves as the catalytic Nucleophile; for GATase activity. The L-glutamine site is built by Gln342, Asn380, Gly382, and Tyr383. Residues His422 and Glu424 each act as for GATase activity in the active site. The segment at 438-477 is linker; sequence VFIDVVKRSADAKSLQPFKLPGGTIEENRSRHPLVDAKRV. Positions 478–1014 are CPSase A; sequence LILGSGGLSI…VEHDIHFNDK (537 aa). The CPSase (Carbamoyl phosphate synthase) stretch occupies residues 478-1514; the sequence is LILGSGGLSI…TNVKCAKLMI (1037 aa). Residues Arg594, Arg634, Gly640, Gly641, Arg671, Met673, Glu678, Gly704, Ile705, His706, Gln747, and Glu761 each coordinate ATP. The ATP-grasp 1 domain maps to 598 to 790; it reads ARAMDEINEK…LAFTAAKLGL (193 aa). Gln747, Glu761, and Asn763 together coordinate Mg(2+). 3 residues coordinate Mn(2+): Gln747, Glu761, and Asn763. The CPSase B stretch occupies residues 1015-1514; sequence GVMVLGSGVY…TNVKCAKLMI (500 aa). Residue Ser1119 is modified to Phosphoserine. The ATP-grasp 2 domain maps to 1133–1324; it reads SRMLDDIGVD…MISMATDVIM (192 aa). Arg1169, Lys1208, Ile1210, Glu1215, Gly1240, Val1241, His1242, Ser1243, Gln1283, and Glu1295 together coordinate ATP. Mg(2+) contacts are provided by Gln1283, Glu1295, and Asn1297. Mn(2+) is bound by residues Gln1283, Glu1295, and Asn1297. The region spanning 1390-1552 is the MGS-like domain; the sequence is FRLPKKNILI…INISAFLPEF (163 aa). The linker stretch occupies residues 1515–1524; it reads EAICRNLDFS. A defective DHOase domain region spans residues 1525-1853; it reads LSTVDFQSSF…FDGHDVFFDG (329 aa). A linker region spans residues 1854 to 1935; sequence ELNFEHTYGR…VQLINSSPFY (82 aa). 2 positions are modified to phosphoserine: Ser1881 and Ser1885. An ATCase (Aspartate transcarbamylase) region spans residues 1936–2244; it reads RKHIISVHQV…CVMGATEVAN (309 aa). Carbamoyl phosphate contacts are provided by Arg1988 and Thr1989. Lys2016 provides a ligand contact to L-aspartate. 3 residues coordinate carbamoyl phosphate: Arg2037, His2065, and Gln2068. Residues Arg2098 and Arg2160 each contribute to the L-aspartate site. Positions 2199 and 2200 each coordinate carbamoyl phosphate.

In the N-terminal section; belongs to the CarA family. It in the 2nd section; belongs to the CarB family. The protein in the 3rd section; belongs to the metallo-dependent hydrolases superfamily. DHOase family. CAD subfamily. This sequence in the C-terminal section; belongs to the aspartate/ornithine carbamoyltransferase superfamily. ATCase family. Mg(2+) is required as a cofactor. Requires Mn(2+) as cofactor.

It catalyses the reaction hydrogencarbonate + L-glutamine + 2 ATP + H2O = carbamoyl phosphate + L-glutamate + 2 ADP + phosphate + 2 H(+). It carries out the reaction L-glutamine + H2O = L-glutamate + NH4(+). The catalysed reaction is hydrogencarbonate + NH4(+) + 2 ATP = carbamoyl phosphate + 2 ADP + phosphate + 2 H(+). The enzyme catalyses carbamoyl phosphate + L-aspartate = N-carbamoyl-L-aspartate + phosphate + H(+). The protein operates within pyrimidine metabolism; UMP biosynthesis via de novo pathway; (S)-dihydroorotate from bicarbonate: step 1/3. Its pathway is pyrimidine metabolism; UMP biosynthesis via de novo pathway; (S)-dihydroorotate from bicarbonate: step 2/3. Both CPSase and ATCase activities are feedback inhibited by the end product UTP. Multifunctional protein that encodes the first 2 enzymatic activities of the de novo pyrimidine pathway: carbamoylphosphate synthetase (CPSase; EC 6.3.5.5) and aspartate transcarbamylase (ATCase; EC 2.1.3.2). The CPSase-function is accomplished in 2 steps, by a glutamine-dependent amidotransferase activity (GATase) that binds and cleaves glutamine to produce ammonia, followed by an ammonium-dependent carbamoyl phosphate synthetase, which reacts with the ammonia, hydrogencarbonate and ATP to form carbamoyl phosphate. The endogenously produced carbamoyl phosphate is sequestered and channeled to the ATCase active site. ATCase then catalyzes the formation of carbamoyl-L-aspartate from L-aspartate and carbamoyl phosphate. This is Multifunctional protein ura1 (ura1) from Schizosaccharomyces pombe (strain 972 / ATCC 24843) (Fission yeast).